We begin with the raw amino-acid sequence, 181 residues long: Translation initiation factor IF-3 (181 aa).

Belongs to the IF-3 family. Monomer.

It localises to the cytoplasm. Its function is as follows. IF-3 binds to the 30S ribosomal subunit and shifts the equilibrium between 70S ribosomes and their 50S and 30S subunits in favor of the free subunits, thus enhancing the availability of 30S subunits on which protein synthesis initiation begins. The protein is Translation initiation factor IF-3 of Idiomarina loihiensis (strain ATCC BAA-735 / DSM 15497 / L2-TR).